The following is a 976-amino-acid chain: Terminal uridylyltransferase 1 (976 aa).

2 disordered regions span residues 1–47 (MVSK…DADF) and 129–185 (TGRS…TTEG). The segment at 1–188 (MVSKYHRLLQ…EDDTTEGPRG (188 aa)) is required for oligomerization and may contribute to the incorporation into the MPsome complex. Positions 147-183 (ADDESDGNLDTDGSDASEGDEVESTTDADVYGEDDTT) are enriched in acidic residues. The C2H2-type; atypical zinc-finger motif lies at 190-221 (VRLYSCDACPHAVFTTHAALLAHAEEHHADLL). Zn(2+)-binding residues include Cys-195, Cys-198, His-212, and His-217. UTP contacts are provided by residues Ser-298 and 309–312 (ADID). Asp-310 and Asp-312 together coordinate Mg(2+). Residue Arg-358 participates in RNA binding. In terms of domain architecture, PAP-associated spans 366 to 425 (ASSPILTVARRDAEDVVARSIRFILNGPATREDRLLLEGSVRDAVGPTGVQQVWWNRTSD). UTP contacts are provided by residues 480–484 (GIRNS), Lys-505, Lys-509, and 523–524 (SY). The Nucleotide recognition motif (NRM) motif lies at 652-661 (IEDPYEENLN). Positions 700–976 (DSSGTPAAGG…SKVTPFKSPR (277 aa)) are important for catalytic activity and RNA binding. The segment at 732-755 (SESRRLPQSNSDNSGRIANGDNES) is disordered.

This sequence belongs to the DNA polymerase type-B-like family. Oligomer. Component of the mitochondrial 3' processome (MPsome) complex composed at least of terminal uridylyltransferase KRET1/TUT1, 3'-5' exonuclease DSS1, MPSS1, MPSS2 and MPSS3. Within the complex, interacts with DSS1, MPSS1 and MPSS3. Mg(2+) serves as cofactor. Requires Mn(2+) as cofactor.

Its subcellular location is the mitochondrion. It carries out the reaction RNA(n) + UTP = RNA(n)-3'-uridine ribonucleotide + diphosphate. Terminal uridylyltransferase which is involved in the post-transcriptional editing of mitochondrial RNA, a process involving the addition and deletion of uridine (U) nucleotides in the pre-RNA. Specifically, catalyzes the addition of Us to the 3'-hydroxyl group of guided RNA (gRNA), ribosomal RNA (rRNA) and some mRNAs. As part of the mitochondrial 3' processome (MPsome), catalyzes the primary 3' uridylation of gRNA precursors to facilitate their recognition and to induce their processive 3'-5' degradation by DSS1, and the secondary 3' uridylation of mature gRNAs. Involved in the 3' uridylylation of the long A/U tail of some edited and never-edited mRNAs. Promotes 3' uridylylation-mediated decay of some never-edited mRNAs. Does not mediate RNA-independent UTP polymerization. The chain is Terminal uridylyltransferase 1 from Trypanosoma brucei brucei.